A 280-amino-acid chain; its full sequence is Orotidine 5'-phosphate decarboxylase (280 aa).

Lys96 acts as the Proton donor in catalysis.

This sequence belongs to the OMP decarboxylase family. Type 2 subfamily.

It carries out the reaction orotidine 5'-phosphate + H(+) = UMP + CO2. The protein operates within pyrimidine metabolism; UMP biosynthesis via de novo pathway; UMP from orotate: step 2/2. This chain is Orotidine 5'-phosphate decarboxylase, found in Parabacteroides distasonis (strain ATCC 8503 / DSM 20701 / CIP 104284 / JCM 5825 / NCTC 11152).